The chain runs to 417 residues: Phosphoglycerate kinase 1 (417 aa).

An N-acetylserine modification is found at Ser2. Phosphoserine is present on residues Ser2 and Ser4. Lys6 bears the N6-succinyllysine mark. The residue at position 11 (Lys11) is an N6-acetyllysine. Residues Val23, Asp24, Phe25, Asn26, Gln38, and Arg39 each coordinate (2R)-3-phosphoglycerate. The mitochondrial targeting region exposed following cis-trans isomerization by PIN1 and recognized by the TOM complex for mitochondrial translocation of the protein stretch occupies residues 38-43 (QRIKAA). Lys48 bears the N6-acetyllysine; alternate mark. Lys48 carries the N6-succinyllysine; alternate modification. Ser62, His63, Gly65, and Arg66 together coordinate (2R)-3-phosphoglycerate. Lys75 bears the N6-acetyllysine mark. Residue Tyr76 is modified to Phosphotyrosine. Residues Lys86 and Lys91 each carry the N6-acetyllysine modification. Lys97 carries the N6-acetyllysine; alternate modification. Lys97 is modified (N6-(2-hydroxyisobutyryl)lysine; alternate). (2R)-3-phosphoglycerate is bound by residues Leu122 and Arg123. Position 131 is an N6-acetyllysine; alternate (Lys131). Residue Lys131 is modified to N6-malonyllysine; alternate. Lys146 is modified (N6-acetyllysine). Positions 170 and 171 each coordinate (2R)-3-phosphoglycerate. Lys191 carries the post-translational modification N6-succinyllysine. Residue Tyr196 is modified to Phosphotyrosine. An N6-acetyllysine modification is found at Lys199. A Phosphoserine modification is found at Ser203. Gly214 is an ADP binding site. A CDP-binding site is contributed by Gly214. Ala215 and Lys216 together coordinate AMP. Ala215 lines the ATP pocket. Ala215 provides a ligand contact to Mg(2+). At Lys216 the chain carries N6-(2-hydroxyisobutyryl)lysine. 2 residues coordinate Mg(2+): Ala218 and Asp219. Asp219 contacts CDP. Lys220 lines the AMP pocket. Lys220 lines the ATP pocket. N6-(2-hydroxyisobutyryl)lysine is present on Lys220. Gly238 serves as a coordination point for ADP. Gly238 lines the CDP pocket. Gly239 serves as a coordination point for AMP. Gly239 lines the ATP pocket. N6-acetyllysine is present on residues Lys267 and Lys291. Gly313 serves as a coordination point for AMP. ATP is bound at residue Gly313. At Lys323 the chain carries N6-(2-hydroxyisobutyryl)lysine. Gly338, Val340, and Phe343 together coordinate CDP. Phe343 lines the ADP pocket. Glu344 is an AMP binding site. Glu344 contacts ATP. An N6-acetyllysine modification is found at Lys361. Asp375 and Thr376 together coordinate ATP. Asp375 lines the Mg(2+) pocket.

The protein belongs to the phosphoglycerate kinase family. In terms of assembly, monomer. Interacts with kinase MAPK1/ERK2; the interaction is direct, occurs under hypoxic conditions, and promotes its interaction with PIN1. Interacts with peptidyl-prolyl cis-trans isomerase PIN1; the interaction is direct, occurs under hypoxic conditions, and targets the protein to the mitochondrion by promoting interactions with the TOM complex. Interacts with mitochondrial circRNA mcPGK1 (via its 2nd stem-loop); the interaction is direct and targets the protein to the mitochondrion by promoting interactions with the TOM complex. Interacts with pyruvate dehydrogenase kinase PDK1; the interaction is direct, occurs under hypoxic conditions and leads to PDK1-mediated inhibition of pyruvate dehydrogenase complex activity. Mg(2+) is required as a cofactor. Post-translationally, phosphorylated at Ser-203 by MAPK1/ERK2 under hypoxic conditions, which promotes its mitochondrial targeting. In terms of tissue distribution, testis, lung, brain, skeletal muscle, liver, intestine, and kidney (at protein level).

It localises to the cytoplasm. The protein resides in the cytosol. The protein localises to the mitochondrion matrix. The catalysed reaction is (2R)-3-phosphoglycerate + ATP = (2R)-3-phospho-glyceroyl phosphate + ADP. It catalyses the reaction L-seryl-[protein] + ATP = O-phospho-L-seryl-[protein] + ADP + H(+). It participates in carbohydrate degradation; glycolysis; pyruvate from D-glyceraldehyde 3-phosphate: step 2/5. Catalyzes one of the two ATP producing reactions in the glycolytic pathway via the reversible conversion of 1,3-diphosphoglycerate to 3-phosphoglycerate. Both L- and D- forms of purine and pyrimidine nucleotides can be used as substrates, but the activity is much lower on pyrimidines. In addition to its role as a glycolytic enzyme, it seems that PGK-1 acts as a polymerase alpha cofactor protein (primer recognition protein). Acts as a protein kinase when localized to the mitochondrion where it phosphorylates pyruvate dehydrogenase kinase PDK1 to inhibit pyruvate dehydrogenase complex activity and suppress the formation of acetyl-coenzyme A from pyruvate, and consequently inhibit oxidative phosphorylation and promote glycolysis. May play a role in sperm motility. The chain is Phosphoglycerate kinase 1 (Pgk1) from Mus musculus (Mouse).